A 207-amino-acid chain; its full sequence is FMN-dependent NADH:quinone oxidoreductase 1 (207 aa).

Residues Ser-9, 15–17, and 139–142 contribute to the FMN site; these read SIS and TRGG.

It belongs to the azoreductase type 1 family. As to quaternary structure, homodimer. The cofactor is FMN.

The catalysed reaction is 2 a quinone + NADH + H(+) = 2 a 1,4-benzosemiquinone + NAD(+). It catalyses the reaction N,N-dimethyl-1,4-phenylenediamine + anthranilate + 2 NAD(+) = 2-(4-dimethylaminophenyl)diazenylbenzoate + 2 NADH + 2 H(+). Functionally, quinone reductase that provides resistance to thiol-specific stress caused by electrophilic quinones. Also exhibits azoreductase activity. Catalyzes the reductive cleavage of the azo bond in aromatic azo compounds to the corresponding amines. This chain is FMN-dependent NADH:quinone oxidoreductase 1, found in Trichormus variabilis (strain ATCC 29413 / PCC 7937) (Anabaena variabilis).